A 466-amino-acid polypeptide reads, in one-letter code: Transcription factor SOX-10 (466 aa).

Residues 1 to 67 form a disordered region; it reads MAEEQDLSEV…QQDGEADDDK (67 aa). The span at 23 to 32 shows a compositional bias: low complexity; sequence LSPGSAPSLG. S24 is modified (phosphoserine). Positions 62–102 are dimerization (DIM); it reads EADDDKFPVCIREAVSQVLSGYDWTLVPMPVRVNGASKSKP. A DNA-binding region (HMG box) is located at residues 104 to 172; the sequence is VKRPMNAFMV…QHKKDHPDYK (69 aa). Positions 134-145 match the Nuclear export signal motif; that stretch reads LSKTLGKLWRLL. Composition is skewed to basic and acidic residues over residues 160–173 and 254–271; these read LRMQ…DYKY and ADPK…KPHI. 4 disordered regions span residues 160–199, 212–274, 354–375, and 433–466; these read LRMQ…EQGG, LDHR…IDFG, AQVK…QPST, and RPLY…LSRP. The interval 228–310 is transactivation domain (TAM); sequence PEHPSGQSHG…LPPNGHPGHV (83 aa). Residues 353-466 are transactivation domain (TAC); it reads KAQVKTETAG…QPVYTTLSRP (114 aa). Residues 440 to 466 show a composition bias toward polar residues; it reads SDPSPSGPQSHSPTHWEQPVYTTLSRP.

Monomer. Interacts with ARMCX3 at the mitochondrial outer membrane surface. Interacts with PAX3. As to expression, expressed in fetal brain and in adult brain, heart, small intestine and colon.

It localises to the cytoplasm. Its subcellular location is the nucleus. It is found in the mitochondrion outer membrane. In terms of biological role, transcription factor that plays a central role in developing and mature glia. Specifically activates expression of myelin genes, during oligodendrocyte (OL) maturation, such as DUSP15 and MYRF, thereby playing a central role in oligodendrocyte maturation and CNS myelination. Once induced, MYRF cooperates with SOX10 to implement the myelination program. Transcriptional activator of MITF, acting synergistically with PAX3. Transcriptional activator of MBP, via binding to the gene promoter. The polypeptide is Transcription factor SOX-10 (SOX10) (Homo sapiens (Human)).